The following is an 802-amino-acid chain: Serine/threonine-protein kinase zyg-8 (802 aa).

The segment covering 1-13 (MPQTSAWQLNDTT) has biased composition (polar residues). The interval 1–102 (MPQTSAWQLN…SAPSTSSAHR (102 aa)) is disordered. Over residues 15-24 (RPPPPPPPPG) the composition is skewed to pro residues. Low complexity predominate over residues 89–99 (SPSSSAPSTSS). Doublecortin domains are found at residues 211–298 (KRLR…VDYS) and 340–423 (RIIK…ADDL). The disordered stretch occupies residues 430-470 (HKSVGSGTSSNMRRTSRRSTMPNRNESLRHDRSGSVIPDQD). The segment covering 434–454 (GSGTSSNMRRTSRRSTMPNRN) has biased composition (low complexity). In terms of domain architecture, Protein kinase spans 482-743 (FQLVRLIGDG…AGELLNDEWM (262 aa)). ATP contacts are provided by residues 488–496 (IGDGNTAVV) and Lys-512. The active-site Proton acceptor is Asp-604.

This sequence belongs to the protein kinase superfamily. CAMK Ser/Thr protein kinase family. CaMK subfamily. As to quaternary structure, interacts with tac-1. Expressed in AFD thermosensory neurons. Expressed in cells near the nerve ring, in motor neurons in the ventral nerve cord and in the six touch receptor neurons including ALML/R, PLML/R and AVM and PVM. Expressed in hypodermal and neural tissues and in the germline.

Its subcellular location is the cytoplasm. The protein resides in the cytoskeleton. It localises to the microtubule organizing center. It is found in the centrosome. The protein localises to the spindle. The catalysed reaction is L-seryl-[protein] + ATP = O-phospho-L-seryl-[protein] + ADP + H(+). It catalyses the reaction L-threonyl-[protein] + ATP = O-phospho-L-threonyl-[protein] + ADP + H(+). Probable kinase. Kinase activity may be involved in positioning of spindle poles in meiosis and mitosis. Plays a role in spindle positioning during asymmetric division of one-cell stage embryos. Affects spindle position by promoting microtubule assembly during anaphase. Plays a role in the assembly and stability of oocyte spindle, perhaps balancing the forces in the spindle and maintaining their morphology during metaphase. Plays a role in cell division and in embryonic viability up until gastrulation. Required for neuronal morphology and polarity and restricting ectopic process outgrowth; probably as a result of a role in maintaining microtubule integrity. Involved in maintaining neuronal microtubule number, length and packing. May promote axonal and synaptic growth. Plays a role in regulating thermotaxis responses in AFD thermosensory neurons. Required for touch sensitivity in adult touch response receptor neurons. This chain is Serine/threonine-protein kinase zyg-8, found in Caenorhabditis elegans.